The primary structure comprises 216 residues: MAINRIAHGSLFLTVVLFFLTVNYGEAIWLTIPTTGGTKCVSEEIQSNVVVLADYYVVDEHNPENTPAVSSKVTSPYGNNLHHQENVTHGQFAFTTQEAGNYLACFWIDSSHHLANPITLGVDWKMGIAAKDWDSVAKKEKIEGVELQLRRLEGLVLSIRENLNYIKDREAEMREVSETTNSRVAWFSIMSLGVCVVVVGSQILYLKRYFHKKKLI.

A signal peptide spans 1–27 (MAINRIAHGSLFLTVVLFFLTVNYGEA). Over 28-183 (IWLTIPTTGG…REVSETTNSR (156 aa)) the chain is Lumenal. The GOLD domain occupies 38-151 (TKCVSEEIQS…IEGVELQLRR (114 aa)). N-linked (GlcNAc...) asparagine glycosylation is present at asparagine 86. Residues 137 to 159 (AKKEKIEGVELQLRRLEGLVLSI) are a coiled coil. 2 positions are modified to omega-N-methylated arginine: arginine 169 and arginine 174. A helical transmembrane segment spans residues 184–204 (VAWFSIMSLGVCVVVVGSQIL). Residues 205–216 (YLKRYFHKKKLI) are Cytoplasmic-facing. Positions 209-210 (YF) match the COPII vesicle coat-binding motif. The COPI vesicle coat-binding motif lies at 209–216 (YFHKKKLI).

The protein belongs to the EMP24/GP25L family. In terms of assembly, probably oligomerizes with other members of the EMP24/GP25L family. Associates with the COPI vesicle coat (coatomer). Associates with the COPII vesicle coat (coatomer). Interacts with p24beta2.

Its subcellular location is the endoplasmic reticulum membrane. Involved in vesicular protein trafficking. Mainly functions in the early secretory pathway. Thought to act as cargo receptor at the lumenal side for incorporation of secretory cargo molecules into transport vesicles and to be involved in vesicle coat formation at the cytoplasmic side. Interacts with p24beta2 at endoplasmic reticulum export sites for endoplasmic reticulum exit and coupled transport to the Golgi apparatus. Once in the Golgi, interacts very efficiently with the COPI machinery for retrograde transport back to the endoplasmic reticulum. The chain is Transmembrane emp24 domain-containing protein p24delta5 from Arabidopsis thaliana (Mouse-ear cress).